Reading from the N-terminus, the 396-residue chain is Protein PIN-LIKES 5 (396 aa).

Topologically, residues 1 to 5 are lumenal; sequence MGFWS. The helical transmembrane segment at 6–26 threads the bilayer; it reads LLEVASMPVIQVLFMSLVGAF. Over 27 to 45 the chain is Cytoplasmic; it reads MASDRCKLFPVEARNSMNK. The helical transmembrane segment at 46 to 66 threads the bilayer; it reads VVFVLFAPALMFANLAQTVTL. Topologically, residues 67–73 are lumenal; sequence EDIISWW. The helical transmembrane segment at 74-94 threads the bilayer; the sequence is FMPVNMGLTFLIGGLLGWLVV. Residues 95–106 are Cytoplasmic-facing; sequence KILKPPPYLEGL. A helical transmembrane segment spans residues 107–127; the sequence is IVATCSAGNMGNLPIILVPAI. Over 128–144 the chain is Lumenal; that stretch reads CDEDKSPFGNRSVCRTV. Residues 145 to 165 form a helical membrane-spanning segment; sequence GLSYASFSMALGGFYIWTYTF. The Cytoplasmic portion of the chain corresponds to 166–229; sequence RLIKGSAMKV…WRKGVDFLHE (64 aa). Residues 230–250 traverse the membrane as a helical segment; sequence ILEELLAPPTLGAIIGFIFGA. The Lumenal portion of the chain corresponds to 251 to 273; sequence VRWLRNLIIGDDAPLRIVQSTAK. The chain crosses the membrane as a helical span at residues 274–294; sequence LLGDGTIPCMTIILGGNLIQG. The Cytoplasmic segment spans residues 295–312; that stretch reads LRSSAVKPMVVLGIVCVR. A helical transmembrane segment spans residues 313-333; it reads YIAMPIIGIGIVLTAANLGFL. The Lumenal segment spans residues 334 to 337; the sequence is PADP. The helical transmembrane segment at 338-358 threads the bilayer; it reads LFQYVLMLQFTLPPAMNIGTM. The Cytoplasmic portion of the chain corresponds to 359–370; the sequence is TQLYNVAQDECS. The helical transmembrane segment at 371–391 threads the bilayer; that stretch reads VLMLWTYLVAILALTVWSTIF. The Lumenal segment spans residues 392–396; that stretch reads LHLLV.

The protein belongs to the auxin efflux carrier (TC 2.A.69.2) family. In terms of tissue distribution, expressed in seedlings, cauline leaves and flowers.

It is found in the endoplasmic reticulum membrane. Functionally, involved in cellular auxin homeostasis by regulating auxin metabolism. Regulates intracellular auxin accumulation at the endoplasmic reticulum and thus auxin availability for nuclear auxin signaling. This Arabidopsis thaliana (Mouse-ear cress) protein is Protein PIN-LIKES 5.